A 180-amino-acid polypeptide reads, in one-letter code: ATP synthase subunit delta (180 aa).

It belongs to the ATPase delta chain family. In terms of assembly, F-type ATPases have 2 components, F(1) - the catalytic core - and F(0) - the membrane proton channel. F(1) has five subunits: alpha(3), beta(3), gamma(1), delta(1), epsilon(1). F(0) has three main subunits: a(1), b(2) and c(10-14). The alpha and beta chains form an alternating ring which encloses part of the gamma chain. F(1) is attached to F(0) by a central stalk formed by the gamma and epsilon chains, while a peripheral stalk is formed by the delta and b chains.

The protein localises to the cell inner membrane. Its function is as follows. F(1)F(0) ATP synthase produces ATP from ADP in the presence of a proton or sodium gradient. F-type ATPases consist of two structural domains, F(1) containing the extramembraneous catalytic core and F(0) containing the membrane proton channel, linked together by a central stalk and a peripheral stalk. During catalysis, ATP synthesis in the catalytic domain of F(1) is coupled via a rotary mechanism of the central stalk subunits to proton translocation. Functionally, this protein is part of the stalk that links CF(0) to CF(1). It either transmits conformational changes from CF(0) to CF(1) or is implicated in proton conduction. The polypeptide is ATP synthase subunit delta (Anaplasma phagocytophilum (strain HZ)).